We begin with the raw amino-acid sequence, 201 residues long: Glycerol-3-phosphate acyltransferase (201 aa).

5 consecutive transmembrane segments (helical) span residues 3–23, 53–73, 80–100, 115–135, and 153–175; these read LFAI…SAIL, WVAL…VWLG, HFEL…PIFF, IAPI…LIFF, and FYVW…LLIY.

Belongs to the PlsY family. In terms of assembly, probably interacts with PlsX.

The protein localises to the cell inner membrane. It catalyses the reaction an acyl phosphate + sn-glycerol 3-phosphate = a 1-acyl-sn-glycero-3-phosphate + phosphate. It functions in the pathway lipid metabolism; phospholipid metabolism. Functionally, catalyzes the transfer of an acyl group from acyl-phosphate (acyl-PO(4)) to glycerol-3-phosphate (G3P) to form lysophosphatidic acid (LPA). This enzyme utilizes acyl-phosphate as fatty acyl donor, but not acyl-CoA or acyl-ACP. This chain is Glycerol-3-phosphate acyltransferase, found in Pasteurella multocida (strain Pm70).